Here is a 322-residue protein sequence, read N- to C-terminus: tRNA dimethylallyltransferase (322 aa).

21–28 (GQTAVGKT) serves as a coordination point for ATP. 23–28 (TAVGKT) is a substrate binding site. Residues 46–49 (DSGC) are interaction with substrate tRNA.

The protein belongs to the IPP transferase family. Monomer. Mg(2+) serves as cofactor.

It catalyses the reaction adenosine(37) in tRNA + dimethylallyl diphosphate = N(6)-dimethylallyladenosine(37) in tRNA + diphosphate. Its function is as follows. Catalyzes the transfer of a dimethylallyl group onto the adenine at position 37 in tRNAs that read codons beginning with uridine, leading to the formation of N6-(dimethylallyl)adenosine (i(6)A). This Wigglesworthia glossinidia brevipalpis protein is tRNA dimethylallyltransferase.